The chain runs to 351 residues: Phospho-N-acetylmuramoyl-pentapeptide-transferase (351 aa).

10 helical membrane passes run 17-37, 63-83, 85-105, 124-144, 158-178, 190-210, 230-250, 254-274, 279-299, and 328-348; these read TAYA…FIIL, IPTM…FFWI, FWNI…CLGF, FKIY…YYFG, SLKL…LISA, GLAI…AYLA, LVVF…FNAY, IMMG…TALI, ILFA…IIQV, and QVVI…LSTL.

Belongs to the glycosyltransferase 4 family. MraY subfamily. Mg(2+) is required as a cofactor.

The protein localises to the cell inner membrane. The enzyme catalyses UDP-N-acetyl-alpha-D-muramoyl-L-alanyl-gamma-D-glutamyl-meso-2,6-diaminopimeloyl-D-alanyl-D-alanine + di-trans,octa-cis-undecaprenyl phosphate = di-trans,octa-cis-undecaprenyl diphospho-N-acetyl-alpha-D-muramoyl-L-alanyl-D-glutamyl-meso-2,6-diaminopimeloyl-D-alanyl-D-alanine + UMP. The protein operates within cell wall biogenesis; peptidoglycan biosynthesis. Catalyzes the initial step of the lipid cycle reactions in the biosynthesis of the cell wall peptidoglycan: transfers peptidoglycan precursor phospho-MurNAc-pentapeptide from UDP-MurNAc-pentapeptide onto the lipid carrier undecaprenyl phosphate, yielding undecaprenyl-pyrophosphoryl-MurNAc-pentapeptide, known as lipid I. This is Phospho-N-acetylmuramoyl-pentapeptide-transferase from Borrelia turicatae (strain 91E135).